The sequence spans 149 residues: D-aminoacyl-tRNA deacylase (149 aa).

Residues 137 to 138 (GP) carry the Gly-cisPro motif, important for rejection of L-amino acids motif.

The protein belongs to the DTD family. As to quaternary structure, homodimer.

It is found in the cytoplasm. The catalysed reaction is glycyl-tRNA(Ala) + H2O = tRNA(Ala) + glycine + H(+). It carries out the reaction a D-aminoacyl-tRNA + H2O = a tRNA + a D-alpha-amino acid + H(+). In terms of biological role, an aminoacyl-tRNA editing enzyme that deacylates mischarged D-aminoacyl-tRNAs. Also deacylates mischarged glycyl-tRNA(Ala), protecting cells against glycine mischarging by AlaRS. Acts via tRNA-based rather than protein-based catalysis; rejects L-amino acids rather than detecting D-amino acids in the active site. By recycling D-aminoacyl-tRNA to D-amino acids and free tRNA molecules, this enzyme counteracts the toxicity associated with the formation of D-aminoacyl-tRNA entities in vivo and helps enforce protein L-homochirality. This chain is D-aminoacyl-tRNA deacylase, found in Desulforudis audaxviator (strain MP104C).